The sequence spans 1372 residues: DNA-directed RNA polymerase subunit beta'' (1372 aa).

Zn(2+)-binding residues include cysteine 252, cysteine 321, cysteine 328, and cysteine 331.

This sequence belongs to the RNA polymerase beta' chain family. RpoC2 subfamily. As to quaternary structure, in plastids the minimal PEP RNA polymerase catalytic core is composed of four subunits: alpha, beta, beta', and beta''. When a (nuclear-encoded) sigma factor is associated with the core the holoenzyme is formed, which can initiate transcription. The cofactor is Zn(2+).

It localises to the plastid. Its subcellular location is the organellar chromatophore. It catalyses the reaction RNA(n) + a ribonucleoside 5'-triphosphate = RNA(n+1) + diphosphate. Functionally, DNA-dependent RNA polymerase catalyzes the transcription of DNA into RNA using the four ribonucleoside triphosphates as substrates. The sequence is that of DNA-directed RNA polymerase subunit beta'' from Paulinella chromatophora.